A 258-amino-acid polypeptide reads, in one-letter code: Synapse differentiation-inducing gene protein 1 (258 aa).

Residues 1-181 (MDGIIEQKSM…NFLMMPPRDH (181 aa)) are Cytoplasmic-facing. At Ser137 the chain carries Phosphoserine. Residues 182–202 (LGLSVFSMLCCFWPLGIAAFY) traverse the membrane as a helical segment. The Extracellular portion of the chain corresponds to 203-228 (LSHETNKAVAKGDLHQASTSSRRALF). Positions 229–249 (LAVLSITIGTGVYVGVAVALI) form an intramembrane region, helical. Over 250–258 (AYLSKNNHL) the chain is Extracellular.

Belongs to the CD225/Dispanin family. As to quaternary structure, homodimer. Interacts with GRIA1 and GRIA2.

The protein resides in the cell membrane. It is found in the early endosome membrane. Its subcellular location is the postsynaptic density membrane. It localises to the synapse. The protein localises to the cell projection. The protein resides in the dendrite. It is found in the dendritic spine. Functionally, may regulate AMPA receptor content at nascent synapses, and have a role in postsynaptic development and maturation. This Homo sapiens (Human) protein is Synapse differentiation-inducing gene protein 1 (SYNDIG1).